The sequence spans 320 residues: Protein EI24 homolog (320 aa).

Transmembrane regions (helical) follow at residues 41–61 (QCFLLNGLIFLGSLGVFKWFI), 94–114 (GLLQLFYVFWFYPLYMLSFIL), and 175–195 (ILLLTFFFLEVCVVGVIPYIG). A glycan (N-linked (GlcNAc...) asparagine) is linked at Asn-217. Helical transmembrane passes span 227-247 (LDFFQSNWAFFAGFGSPCVLA), 248-268 (IFFLSPLVSGALMAILFPLFV), and 292-312 (LGKLPIFYIADTLSMLALSIF).

It belongs to the EI24 (TC 9.B.7) family.

It localises to the membrane. In Arabidopsis thaliana (Mouse-ear cress), this protein is Protein EI24 homolog.